The chain runs to 381 residues: Sensor histidine kinase FlgS (381 aa).

A Histidine kinase domain is found at 177–381 (HLAHEIRNPV…TFEIKILNAS (205 aa)). H180 is subject to Phosphohistidine; by autocatalysis.

In terms of assembly, interacts (via its C-terminal kinase domain) with FlhA (via N-terminus). Post-translationally, autophosphorylated.

The catalysed reaction is ATP + protein L-histidine = ADP + protein N-phospho-L-histidine.. Functionally, member of the two-component regulatory system FlgR/FlgS that induces the transcriptional induction of the genes needed in motility and flagellar biogenesis. Also plays an essential role in bacterial survival at pH 2.5 independently of FlgR. Functions as a sensor protein kinase which is autophosphorylated at a histidine residue and transfers its phosphate group to the conserved aspartic acid residue in the regulatory domain of FlgR. In turn, FlgR functions as a transcriptional regulator initiating transcription from RpoN-dependent promoters. This is Sensor histidine kinase FlgS (flgS) from Helicobacter pylori (strain ATCC 700392 / 26695) (Campylobacter pylori).